Here is a 682-residue protein sequence, read N- to C-terminus: Methionine--tRNA ligase (682 aa).

A 'HIGH' region motif is present at residues 14 to 24; it reads PYANGPVHLGH. Cysteine 145, cysteine 148, cysteine 158, and cysteine 161 together coordinate Zn(2+). The 'KMSKS' region motif lies at 331–335; it reads KMSKS. Lysine 334 is a binding site for ATP. A tRNA-binding domain is found at 580 to 682; sequence AFAAVDLRVA…SGAKPGQRIK (103 aa).

Belongs to the class-I aminoacyl-tRNA synthetase family. MetG type 1 subfamily. In terms of assembly, homodimer. The cofactor is Zn(2+).

The protein localises to the cytoplasm. The enzyme catalyses tRNA(Met) + L-methionine + ATP = L-methionyl-tRNA(Met) + AMP + diphosphate. Its function is as follows. Is required not only for elongation of protein synthesis but also for the initiation of all mRNA translation through initiator tRNA(fMet) aminoacylation. The protein is Methionine--tRNA ligase of Pseudomonas syringae pv. tomato (strain ATCC BAA-871 / DC3000).